The sequence spans 482 residues: O-phosphoseryl-tRNA(Sec) selenium transferase (482 aa).

The tract at residues 1 to 36 (MKSSFGKKEGEYSRLVSKSSNKLLNSLWEKKQIPEE) is tetramerization. Arg-69 lines the pyridoxal 5'-phosphate pocket. A phosphate loop (P-loop) region spans residues 90–100 (GRSGNLLEIQP). Residues Arg-91, Ser-92, and Gln-99 each contribute to the substrate site. Lys-277 carries the N6-(pyridoxal phosphate)lysine modification. Residue Arg-306 participates in substrate binding. TRNA is bound at residue Arg-388. The tract at residues 461-482 (DRRGGSSGRRVPMNESFDMEND) is disordered.

Belongs to the SepSecS family. As to quaternary structure, homotetramer formed by a catalytic dimer and a non-catalytic dimer serving as a binding platform that orients tRNASec for catalysis. Each tetramer binds the CCA ends of two tRNAs which point to the active sites of the catalytic dimer. It depends on pyridoxal 5'-phosphate as a cofactor.

It localises to the cytoplasm. It carries out the reaction O-phospho-L-seryl-tRNA(Sec) + selenophosphate + H2O = L-selenocysteinyl-tRNA(Sec) + 2 phosphate. It functions in the pathway aminoacyl-tRNA biosynthesis; selenocysteinyl-tRNA(Sec) biosynthesis; selenocysteinyl-tRNA(Sec) from L-seryl-tRNA(Sec) (archaeal/eukaryal route): step 2/2. In terms of biological role, converts O-phosphoseryl-tRNA(Sec) to selenocysteinyl-tRNA(Sec) required for selenoprotein biosynthesis. The sequence is that of O-phosphoseryl-tRNA(Sec) selenium transferase (secs-1) from Caenorhabditis briggsae.